The chain runs to 389 residues: Alanine racemase (389 aa).

Residue Lys48 is the Proton acceptor; specific for D-alanine of the active site. Lys48 is modified (N6-(pyridoxal phosphate)lysine). Arg144 contributes to the substrate binding site. Tyr281 (proton acceptor; specific for L-alanine) is an active-site residue. Residue Met329 coordinates substrate.

Belongs to the alanine racemase family. It depends on pyridoxal 5'-phosphate as a cofactor.

It carries out the reaction L-alanine = D-alanine. It functions in the pathway amino-acid biosynthesis; D-alanine biosynthesis; D-alanine from L-alanine: step 1/1. Catalyzes the interconversion of L-alanine and D-alanine. May also act on other amino acids. This chain is Alanine racemase (alr), found in Leptospira interrogans serogroup Icterohaemorrhagiae serovar copenhageni (strain Fiocruz L1-130).